A 151-amino-acid polypeptide reads, in one-letter code: Aspartate carbamoyltransferase regulatory chain (151 aa).

Cys107, Cys112, Cys135, and Cys138 together coordinate Zn(2+).

This sequence belongs to the PyrI family. Contains catalytic and regulatory chains. The cofactor is Zn(2+).

Functionally, involved in allosteric regulation of aspartate carbamoyltransferase. In Thermococcus onnurineus (strain NA1), this protein is Aspartate carbamoyltransferase regulatory chain.